The primary structure comprises 267 residues: Undecaprenyl-diphosphatase (267 aa).

The next 8 helical transmembrane spans lie at 1 to 21 (MSYFEAFILALIQGLTEFLPI), 39 to 59 (QGLAFDVAVHVGTLMAVVIYF), 83 to 103 (AKLAWMIVIATIPACVFGLLM), 111 to 131 (LRSAYVIATTTIVFGLLLWWV), 144 to 164 (TGWKKAVFIGIAQALAMIPGT), 189 to 209 (FLMSIPIITLAGSYLGMKLVT), 218 to 238 (FLLTGILTSFISAYICIHFFL), and 245 to 265 (GMTPFVIYRLILGVGLFAFLL).

It belongs to the UppP family.

It is found in the cell inner membrane. The catalysed reaction is di-trans,octa-cis-undecaprenyl diphosphate + H2O = di-trans,octa-cis-undecaprenyl phosphate + phosphate + H(+). In terms of biological role, catalyzes the dephosphorylation of undecaprenyl diphosphate (UPP). Confers resistance to bacitracin. The protein is Undecaprenyl-diphosphatase of Vibrio parahaemolyticus serotype O3:K6 (strain RIMD 2210633).